We begin with the raw amino-acid sequence, 176 residues long: Large ribosomal subunit protein uL10 (176 aa).

It belongs to the universal ribosomal protein uL10 family. In terms of assembly, part of the ribosomal stalk of the 50S ribosomal subunit. The N-terminus interacts with L11 and the large rRNA to form the base of the stalk. The C-terminus forms an elongated spine to which L12 dimers bind in a sequential fashion forming a multimeric L10(L12)X complex.

Its function is as follows. Forms part of the ribosomal stalk, playing a central role in the interaction of the ribosome with GTP-bound translation factors. This Alcanivorax borkumensis (strain ATCC 700651 / DSM 11573 / NCIMB 13689 / SK2) protein is Large ribosomal subunit protein uL10.